A 363-amino-acid polypeptide reads, in one-letter code: Aminomethyltransferase (363 aa).

This sequence belongs to the GcvT family. The glycine cleavage system is composed of four proteins: P, T, L and H.

The enzyme catalyses N(6)-[(R)-S(8)-aminomethyldihydrolipoyl]-L-lysyl-[protein] + (6S)-5,6,7,8-tetrahydrofolate = N(6)-[(R)-dihydrolipoyl]-L-lysyl-[protein] + (6R)-5,10-methylene-5,6,7,8-tetrahydrofolate + NH4(+). Functionally, the glycine cleavage system catalyzes the degradation of glycine. The polypeptide is Aminomethyltransferase (Thermotoga neapolitana (strain ATCC 49049 / DSM 4359 / NBRC 107923 / NS-E)).